A 330-amino-acid polypeptide reads, in one-letter code: Membrane progestin receptor gamma (330 aa).

The Cytoplasmic segment spans residues 1–51 (MLSLKLPRLFSIDQIPQVFHEQGILFGYRHPQSSATACILSLFQMTNETLN). The helical transmembrane segment at 52-72 (IWTHLLPFWFFAWRFVTALYM) threads the bilayer. Over 73–80 (TDIKNDSY) the chain is Extracellular. Residues 81–101 (SWPMLVYMCTSCVYPLVSSCA) form a helical membrane-spanning segment. Topologically, residues 102-113 (HTFSSMSKNARH) are cytoplasmic. The helical transmembrane segment at 114 to 134 (ICYFLDYGAVNLFSLGSAIAY) threads the bilayer. The Extracellular portion of the chain corresponds to 135–141 (SAYTFPD). The chain crosses the membrane as a helical span at residues 142 to 162 (ALMCTTFHDYYVALAVLNTIL). Topologically, residues 163–186 (STGLSCYSRFLEIQKPRLCKVIRV) are cytoplasmic. The helical transmembrane segment at 187–207 (LAFAYPYTWDSLPIFYRLFLF) threads the bilayer. Residues 208 to 253 (PGESAQNEATSYHQKHMIMTLLASFLYSAHLPERLAPGRFDYIGHS) lie on the Extracellular side of the membrane. The chain crosses the membrane as a helical span at residues 254-274 (HQLFHVCVILATHMQMEAILL). The Cytoplasmic portion of the chain corresponds to 275 to 294 (DKTLRKEWLLATSKPFSFSQ). A helical transmembrane segment spans residues 295–315 (IAGAILLCIIFSLSNIIYFSA). Residues 316 to 330 (ALYRIPKPELHKKET) lie on the Extracellular side of the membrane.

It belongs to the ADIPOR family. In terms of tissue distribution, expressed in the brain, lung, kidney, colon, adrenal and lung.

The protein localises to the cell membrane. Plasma membrane progesterone (P4) receptor coupled to G proteins. Seems to act through a G(i) mediated pathway. May be involved in oocyte maturation. In Homo sapiens (Human), this protein is Membrane progestin receptor gamma.